A 217-amino-acid chain; its full sequence is Ribonuclease HII (217 aa).

Residues 16-217 (YCIAGVDEVG…VARVLGTYHD (202 aa)) form the RNase H type-2 domain. Residues Asp22, Glu23, and Asp114 each coordinate a divalent metal cation.

It belongs to the RNase HII family. Mn(2+) is required as a cofactor. Mg(2+) serves as cofactor.

Its subcellular location is the cytoplasm. It carries out the reaction Endonucleolytic cleavage to 5'-phosphomonoester.. Its function is as follows. Endonuclease that specifically degrades the RNA of RNA-DNA hybrids. The polypeptide is Ribonuclease HII (Colwellia psychrerythraea (strain 34H / ATCC BAA-681) (Vibrio psychroerythus)).